The following is an 893-amino-acid chain: Major vault protein (893 aa).

Alanine 2 is subject to N-acetylalanine. MVP repeat units lie at residues 2 to 56 (ATEE…VPPR), 57 to 111 (HYCT…DITP), 112 to 164 (LQVV…EIIQ), 165 to 217 (ATII…DLVD), 218 to 272 (AVIL…GVVP), 273 to 323 (ITTL…IQDV), 324 to 379 (YVLS…ERQA), 380 to 457 (IPLD…KTRV), and 458 to 520 (VSYR…LLGP). Lysine 444 is covalently cross-linked (Glycyl lysine isopeptide (Lys-Gly) (interchain with G-Cter in SUMO2)). Position 445 is a phosphoserine (serine 445). Lysine 704 participates in a covalent cross-link: Glycyl lysine isopeptide (Lys-Gly) (interchain with G-Cter in SUMO2). Residues 856-893 (QPLGRRVASGPSPGEGISPQSAQAPQAPGDNHVVPVLR) are disordered.

In terms of assembly, the vault ribonucleoprotein particle is a huge (400 A x 670 A) cage structure of 12.9 MDa. It consists of a dimer of half-vaults, with each half-vault comprising 39 identical major vault protein (MVP) chains, PARP4 and one or more vault RNAs (vRNAs). Interacts with TEP1. Interacts with PTEN and activated MAPK1. The phosphorylated protein interacts with the SH2 domains of PTPN11 and SRC. Interacts with APEX1. May interact with ZNF540. Post-translationally, phosphorylated on Tyr residues after EGF stimulation. In terms of processing, dephosphorylated by PTPN11. As to expression, present in most normal tissues. Higher expression observed in epithelial cells with secretory and excretory functions, as well as in cells chronically exposed to xenobiotics, such as bronchial cells and cells lining the intestine. Overexpressed in many multidrug-resistant cancer cells.

The protein localises to the cytoplasm. It is found in the nucleus. It localises to the nuclear pore complex. Its subcellular location is the perinuclear region. Required for normal vault structure. Vaults are multi-subunit structures that may act as scaffolds for proteins involved in signal transduction. Vaults may also play a role in nucleo-cytoplasmic transport. Down-regulates IFNG-mediated STAT1 signaling and subsequent activation of JAK. Down-regulates SRC activity and signaling through MAP kinases. The polypeptide is Major vault protein (MVP) (Homo sapiens (Human)).